The following is a 71-amino-acid chain: Exodeoxyribonuclease 7 small subunit (71 aa).

Belongs to the XseB family. In terms of assembly, heterooligomer composed of large and small subunits.

Its subcellular location is the cytoplasm. The enzyme catalyses Exonucleolytic cleavage in either 5'- to 3'- or 3'- to 5'-direction to yield nucleoside 5'-phosphates.. Bidirectionally degrades single-stranded DNA into large acid-insoluble oligonucleotides, which are then degraded further into small acid-soluble oligonucleotides. The protein is Exodeoxyribonuclease 7 small subunit of Streptococcus suis (strain 98HAH33).